The primary structure comprises 146 residues: Prepilin peptidase-dependent protein D (146 aa).

Residues 1-6 (MDKQRG) constitute a propeptide, leader sequence. The residue at position 7 (Phe-7) is an N-methylphenylalanine. The chain crosses the membrane as a helical span at residues 7 to 27 (FTLIELMVVIGIIAILSAIGI).

This sequence belongs to the N-Me-Phe pilin family.

It is found in the fimbrium. It localises to the membrane. Major component of the type IV pilus (T4P) that plays a role in cell adhesion and motility. Not produced when grown under standard laboratory conditions. The polypeptide is Prepilin peptidase-dependent protein D (ppdD) (Escherichia coli (strain K12)).